A 1357-amino-acid polypeptide reads, in one-letter code: DNA-directed RNA polymerase subunit beta (1357 aa).

Belongs to the RNA polymerase beta chain family. The RNAP catalytic core consists of 2 alpha, 1 beta, 1 beta' and 1 omega subunit. When a sigma factor is associated with the core the holoenzyme is formed, which can initiate transcription.

It carries out the reaction RNA(n) + a ribonucleoside 5'-triphosphate = RNA(n+1) + diphosphate. In terms of biological role, DNA-dependent RNA polymerase catalyzes the transcription of DNA into RNA using the four ribonucleoside triphosphates as substrates. This chain is DNA-directed RNA polymerase subunit beta, found in Pseudomonas paraeruginosa (strain DSM 24068 / PA7) (Pseudomonas aeruginosa (strain PA7)).